The sequence spans 369 residues: Methylthioribose-1-phosphate isomerase (369 aa).

Substrate-binding positions include 54-56, Arg95, and Gln208; that span reads RGA. The active-site Proton donor is the Asp249. Substrate is bound at residue 259-260; sequence NK.

This sequence belongs to the eIF-2B alpha/beta/delta subunits family. MtnA subfamily.

The catalysed reaction is 5-(methylsulfanyl)-alpha-D-ribose 1-phosphate = 5-(methylsulfanyl)-D-ribulose 1-phosphate. It functions in the pathway amino-acid biosynthesis; L-methionine biosynthesis via salvage pathway; L-methionine from S-methyl-5-thio-alpha-D-ribose 1-phosphate: step 1/6. Its function is as follows. Catalyzes the interconversion of methylthioribose-1-phosphate (MTR-1-P) into methylthioribulose-1-phosphate (MTRu-1-P). The polypeptide is Methylthioribose-1-phosphate isomerase (Desulfosudis oleivorans (strain DSM 6200 / JCM 39069 / Hxd3) (Desulfococcus oleovorans)).